The sequence spans 103 residues: N(4)-acetylcytidine amidohydrolase (103 aa).

An ASCH domain is found at 6–100; that stretch reads ITFFQRFQED…AEDRFYVIEF (95 aa). Lysine 21 functions as the Proton acceptor in the catalytic mechanism. The active-site Nucleophile is the threonine 24. The active-site Proton donor is glutamate 74.

The protein belongs to the N(4)-acetylcytidine amidohydrolase family.

The enzyme catalyses N(4)-acetylcytidine + H2O = cytidine + acetate + H(+). It catalyses the reaction N(4)-acetyl-2'-deoxycytidine + H2O = 2'-deoxycytidine + acetate + H(+). It carries out the reaction N(4)-acetylcytosine + H2O = cytosine + acetate + H(+). In terms of biological role, catalyzes the hydrolysis of N(4)-acetylcytidine (ac4C). This Klebsiella pneumoniae (strain 342) protein is N(4)-acetylcytidine amidohydrolase.